The chain runs to 436 residues: Cyclic GMP-AMP synthase (436 aa).

GTP is bound at residue 112–117 (QGSFQY). 2 residues coordinate Mg(2+): aspartate 131 and aspartate 133. ATP is bound at residue arginine 182. Aspartate 193 contributes to the Mg(2+) binding site. An ATP-binding site is contributed by serine 259. Residues lysine 287, serine 301, and aspartate 348 each contribute to the GTP site. 2 disordered regions span residues 339 to 358 (RGVESPDSTDEKPLFPPSYK) and 417 to 436 (AQEPSSASKPEKISSTMVSG). Positions 419 to 436 (EPSSASKPEKISSTMVSG) are enriched in polar residues. Residue glycine 436 forms a Glycyl lysine isopeptide (Gly-Lys) (interchain with K-? in acceptor proteins) linkage.

It belongs to the CD-NTase family. A01 subfamily. Monomer. Interacts with Cap2 in the presence and absence of phage T2. A Cap2 dimer is bound on either side by a DncV monomer. Requires Mg(2+) as cofactor. Post-translationally, in bacteria expressing capV-cdnD-cap2, this protein is conjugated to a number of other proteins (by Cap2 via this protein's C-terminal Gly residue), many of which are involved in metabolism. More conjugated protein is found in the absence of Cap3.

It carries out the reaction GTP + ATP = 3',3'-cGAMP + 2 diphosphate. With respect to regulation, primed for activation by Cap2 which conjugates it to cellular proteins; priming is target protein-specific (green fluorescent protein does not activate the enzyme), but which protein(s) activate is unclear. Enzymatic activity of DncV is inhibited by folate-like molecules, such as 5-methyltetrahydrofolate di-glutamate and 5-methyltetrahydrofolate, suggesting the existence of a signaling pathway that links folate-like metabolism cofactors to the regulation of cyclic dinucleotide second messenger synthesis. Lacks a regulatory loop and is constitutively activated. Its function is as follows. Cyclic nucleotide synthase (second messenger synthase) of a CBASS antivirus system. CBASS (cyclic oligonucleotide-based antiphage signaling system) provides immunity against bacteriophages. The CD-NTase protein (DncV, this protein) synthesizes cyclic nucleotides in response to infection; these serve as specific second messenger signals. The signals activate a diverse range of effectors, leading to bacterial cell death and thus abortive phage infection. A type II-A(GA) CBASS system. Functionally, catalyzes the synthesis of 3',3'-cyclic GMP-AMP (cGAMP), a second messenger in cell signal transduction, from GTP and ATP in response to phage infection. Also able to produce c-di-AMP and c-di-GMP from ATP and GTP, respectively; however, cGAMP is the dominant molecule produced by DncV in vivo, contrary to the 2'3'-cGAMP produced by eukaryotes. Is required for efficient V.cholerae intestinal colonization, and down-regulates the colonization-influencing process of chemotaxis. Is not active with dATP, TTP, UTP or CTP. Its product controls the activity of cGAMP-activated phospholipase CapV, a patatin-like lipase that is a direct cGAMP receptor encoded in the dncV operon. In terms of biological role, protects E.coli against phage infection. When the CBASS operon (capV-dncV-cap2-cap3) is introduced in E.coli MG1655 there is about 100-fold protection against phages P1 and T2. When the operon is introduced in E.coli MG1655 there is a more than 10(3) decrease in the efficiency of T2 plaque formation. Protects 100-fold against phage T5, offers no protection against T7. When the operon is introduced in E.coli MG1655 it protects against phages T2, T4, T5 and T6. Another paper shows the operon confers protection against phages P1, T2, T5 and T6 but not T4 or lambda. This is Cyclic GMP-AMP synthase from Vibrio cholerae serotype O1 (strain ATCC 39315 / El Tor Inaba N16961).